Consider the following 276-residue polypeptide: Large ribosomal subunit protein uL2 (276 aa).

Disordered regions lie at residues M1–H58 and R218–K276. The segment covering A16 to S27 has biased composition (polar residues). Over residues R255–K276 the composition is skewed to basic residues.

It belongs to the universal ribosomal protein uL2 family. In terms of assembly, part of the 50S ribosomal subunit. Forms a bridge to the 30S subunit in the 70S ribosome.

Functionally, one of the primary rRNA binding proteins. Required for association of the 30S and 50S subunits to form the 70S ribosome, for tRNA binding and peptide bond formation. It has been suggested to have peptidyltransferase activity; this is somewhat controversial. Makes several contacts with the 16S rRNA in the 70S ribosome. The protein is Large ribosomal subunit protein uL2 of Bifidobacterium animalis subsp. lactis (strain AD011).